The sequence spans 427 residues: Flotillin-1 (427 aa).

Phosphoserine occurs at positions 19, 163, and 385. The residue at position 387 (Thr387) is a Phosphothreonine.

This sequence belongs to the band 7/mec-2 family. Flotillin subfamily. As to quaternary structure, heterooligomeric complex of flotillin-1 and flotillin-2 and caveolin-1 and caveolin-2. Interacts with ECPAS.

The protein localises to the cell membrane. It localises to the endosome. It is found in the membrane. Its subcellular location is the caveola. The protein resides in the melanosome. The protein localises to the membrane raft. May act as a scaffolding protein within caveolar membranes, functionally participating in formation of caveolae or caveolae-like vesicles. The protein is Flotillin-1 (FLOT1) of Macaca mulatta (Rhesus macaque).